Here is a 320-residue protein sequence, read N- to C-terminus: Acetyl-coenzyme A carboxylase carboxyl transferase subunit alpha (320 aa).

The region spanning Arg34–Gly288 is the CoA carboxyltransferase C-terminal domain.

It belongs to the AccA family. Acetyl-CoA carboxylase is a heterohexamer composed of biotin carboxyl carrier protein (AccB), biotin carboxylase (AccC) and two subunits each of ACCase subunit alpha (AccA) and ACCase subunit beta (AccD).

Its subcellular location is the cytoplasm. It carries out the reaction N(6)-carboxybiotinyl-L-lysyl-[protein] + acetyl-CoA = N(6)-biotinyl-L-lysyl-[protein] + malonyl-CoA. Its pathway is lipid metabolism; malonyl-CoA biosynthesis; malonyl-CoA from acetyl-CoA: step 1/1. Component of the acetyl coenzyme A carboxylase (ACC) complex. First, biotin carboxylase catalyzes the carboxylation of biotin on its carrier protein (BCCP) and then the CO(2) group is transferred by the carboxyltransferase to acetyl-CoA to form malonyl-CoA. The protein is Acetyl-coenzyme A carboxylase carboxyl transferase subunit alpha of Rubrobacter xylanophilus (strain DSM 9941 / JCM 11954 / NBRC 16129 / PRD-1).